A 237-amino-acid polypeptide reads, in one-letter code: MAYARVLLKLSGEALMGDQSYGIDPAIVQSIAEDVAKVVAKGTQLAIVVGGGNIFRGLKGSAAGMDRATADYVGMLATVMNAITLQDGLERAGVATRVQTAIEMQEVAEPYIRRRAIRHLEKGRVVVFGGGCGNPFFTTDTTASLRAAEINADVVFKATKVDGVYDRDPKRFPDAKRYDSLTFQQVLSGELAVMDSTAIALCKDNNIPIVVFDLFEPGNIGKAVAGEAIGSRISNAT.

Lys-9 to Gly-12 contacts ATP. Position 51 (Gly-51) interacts with UMP. Gly-52 and Arg-56 together coordinate ATP. UMP is bound by residues Asp-71 and Cys-132 to Thr-139. Residues Thr-159, Tyr-165, and Asp-168 each coordinate ATP.

Belongs to the UMP kinase family. Homohexamer.

It localises to the cytoplasm. The catalysed reaction is UMP + ATP = UDP + ADP. It functions in the pathway pyrimidine metabolism; CTP biosynthesis via de novo pathway; UDP from UMP (UMPK route): step 1/1. With respect to regulation, inhibited by UTP. Catalyzes the reversible phosphorylation of UMP to UDP. In Prochlorococcus marinus (strain MIT 9303), this protein is Uridylate kinase.